The following is a 114-amino-acid chain: Putative neurotoxin 7 (114 aa).

This sequence belongs to the scolopendra neurotoxin 8 family. Contains 3 disulfide bonds. As to expression, expressed by the venom gland.

It localises to the secreted. This is Putative neurotoxin 7 from Scolopendra mutilans (Chinese red-headed centipede).